Here is a 380-residue protein sequence, read N- to C-terminus: Queuine tRNA-ribosyltransferase (380 aa).

Residue aspartate 96 is the Proton acceptor of the active site. Residues 96–100, aspartate 150, glutamine 193, and glycine 220 each bind substrate; that span reads DSGGF. Residues 251 to 257 are RNA binding; that stretch reads GVGAPDS. Aspartate 270 acts as the Nucleophile in catalysis. The RNA binding; important for wobble base 34 recognition stretch occupies residues 275 to 279; that stretch reads TRIAR. Cysteine 308, cysteine 310, cysteine 313, and histidine 339 together coordinate Zn(2+).

The protein belongs to the queuine tRNA-ribosyltransferase family. In terms of assembly, homodimer. Within each dimer, one monomer is responsible for RNA recognition and catalysis, while the other monomer binds to the replacement base PreQ1. Requires Zn(2+) as cofactor.

The catalysed reaction is 7-aminomethyl-7-carbaguanine + guanosine(34) in tRNA = 7-aminomethyl-7-carbaguanosine(34) in tRNA + guanine. Its pathway is tRNA modification; tRNA-queuosine biosynthesis. Its function is as follows. Catalyzes the base-exchange of a guanine (G) residue with the queuine precursor 7-aminomethyl-7-deazaguanine (PreQ1) at position 34 (anticodon wobble position) in tRNAs with GU(N) anticodons (tRNA-Asp, -Asn, -His and -Tyr). Catalysis occurs through a double-displacement mechanism. The nucleophile active site attacks the C1' of nucleotide 34 to detach the guanine base from the RNA, forming a covalent enzyme-RNA intermediate. The proton acceptor active site deprotonates the incoming PreQ1, allowing a nucleophilic attack on the C1' of the ribose to form the product. After dissociation, two additional enzymatic reactions on the tRNA convert PreQ1 to queuine (Q), resulting in the hypermodified nucleoside queuosine (7-(((4,5-cis-dihydroxy-2-cyclopenten-1-yl)amino)methyl)-7-deazaguanosine). The protein is Queuine tRNA-ribosyltransferase of Streptococcus sanguinis (strain SK36).